Here is a 367-residue protein sequence, read N- to C-terminus: Anthranilate phosphoribosyltransferase (367 aa).

Positions 1-21 (MALSSESSAASAARRPSGGPA) are enriched in low complexity. The interval 1–24 (MALSSESSAASAARRPSGGPATSW) is disordered. Residues G104, 107 to 108 (GD), T112, 114 to 117 (NLST), 132 to 140 (KHGNRAASS), and G144 each bind 5-phospho-alpha-D-ribose 1-diphosphate. G104 lines the anthranilate pocket. S116 is a Mg(2+) binding site. Residue N135 coordinates anthranilate. R190 serves as a coordination point for anthranilate. Mg(2+) contacts are provided by D248 and E249.

This sequence belongs to the anthranilate phosphoribosyltransferase family. As to quaternary structure, homodimer. Requires Mg(2+) as cofactor.

The catalysed reaction is N-(5-phospho-beta-D-ribosyl)anthranilate + diphosphate = 5-phospho-alpha-D-ribose 1-diphosphate + anthranilate. It participates in amino-acid biosynthesis; L-tryptophan biosynthesis; L-tryptophan from chorismate: step 2/5. Catalyzes the transfer of the phosphoribosyl group of 5-phosphorylribose-1-pyrophosphate (PRPP) to anthranilate to yield N-(5'-phosphoribosyl)-anthranilate (PRA). This is Anthranilate phosphoribosyltransferase from Mycolicibacterium paratuberculosis (strain ATCC BAA-968 / K-10) (Mycobacterium paratuberculosis).